The sequence spans 103 residues: UPF0145 protein BLi01945/BL05168 (103 aa).

This sequence belongs to the UPF0145 family.

In Bacillus licheniformis (strain ATCC 14580 / DSM 13 / JCM 2505 / CCUG 7422 / NBRC 12200 / NCIMB 9375 / NCTC 10341 / NRRL NRS-1264 / Gibson 46), this protein is UPF0145 protein BLi01945/BL05168.